The following is a 79-amino-acid chain: Dolichyl-diphosphooligosaccharide--protein glycosyltransferase subunit TMEM258 (79 aa).

An N-acetylmethionine modification is found at Met1. Residues 1–16 (MELEAMSRYTSPVNPA) lie on the Lumenal side of the membrane. The helical transmembrane segment at 17–37 (VFPHLTVVLLAIGMFFTAWFF) threads the bilayer. The Cytoplasmic portion of the chain corresponds to 38 to 54 (VYEVTSTKYTRDICKEL). A helical transmembrane segment spans residues 55-75 (LISLVASLFMGFGVLFLLLWV). Residues 76 to 79 (GIYV) are Lumenal-facing.

Belongs to the OST5 family. Component of the oligosaccharyltransferase (OST) complex. OST exists in two different complex forms which contain common core subunits RPN1, RPN2, OST48, OST4, DAD1 and TMEM258, either STT3A or STT3B as catalytic subunits, and form-specific accessory subunits. STT3A complex assembly occurs through the formation of 3 subcomplexes. Subcomplex 1 contains RPN1 and TMEM258, subcomplex 2 contains the STT3A-specific subunits STT3A, DC2/OSTC, and KCP2 as well as the core subunit OST4, and subcomplex 3 contains RPN2, DAD1, and OST48. The STT3A complex can form stable complexes with the Sec61 complex or with both the Sec61 and TRAP complexes.

It localises to the membrane. The protein resides in the endoplasmic reticulum. Its subcellular location is the cytoplasm. Its pathway is protein modification; protein glycosylation. Subunit of the oligosaccharyl transferase (OST) complex that catalyzes the initial transfer of a defined glycan (Glc(3)Man(9)GlcNAc(2) in eukaryotes) from the lipid carrier dolichol-pyrophosphate to an asparagine residue within an Asn-X-Ser/Thr consensus motif in nascent polypeptide chains, the first step in protein N-glycosylation. N-glycosylation occurs cotranslationally and the complex associates with the Sec61 complex at the channel-forming translocon complex that mediates protein translocation across the endoplasmic reticulum (ER). All subunits are required for a maximal enzyme activity. This chain is Dolichyl-diphosphooligosaccharide--protein glycosyltransferase subunit TMEM258, found in Canis lupus familiaris (Dog).